Reading from the N-terminus, the 282-residue chain is Pantothenate synthetase (282 aa).

ATP is bound at residue 30 to 37 (MGYLHEGH). H37 functions as the Proton donor in the catalytic mechanism. Q61 serves as a coordination point for (R)-pantoate. Q61 provides a ligand contact to beta-alanine. 147 to 150 (GMKD) lines the ATP pocket. (R)-pantoate is bound at residue Q153. ATP contacts are provided by residues V176 and 184–187 (KSSR).

It belongs to the pantothenate synthetase family. Homodimer.

It is found in the cytoplasm. It carries out the reaction (R)-pantoate + beta-alanine + ATP = (R)-pantothenate + AMP + diphosphate + H(+). Its pathway is cofactor biosynthesis; (R)-pantothenate biosynthesis; (R)-pantothenate from (R)-pantoate and beta-alanine: step 1/1. Its function is as follows. Catalyzes the condensation of pantoate with beta-alanine in an ATP-dependent reaction via a pantoyl-adenylate intermediate. In Geobacillus sp. (strain WCH70), this protein is Pantothenate synthetase.